The sequence spans 119 residues: Immunoglobulin heavy variable 2-5 (119 aa).

Positions 1 to 19 (MDTLCSTLLLLTIPSWVLS) are cleaved as a signal peptide. Residue Gln-20 is modified to Pyrrolidone carboxylic acid. Residues 20 to 44 (QITLKESGPTLVKPTQTLTLTCTFS) are framework-1. The region spanning 20–119 (QITLKESGPT…DTATYYCAHR (100 aa)) is the Ig-like domain. Cys-41 and Cys-116 form a disulfide bridge. The segment at 45-54 (GFSLSTSGVG) is complementarity-determining-1. Positions 55-71 (VGWIRQPPGKALEWLAL) are framework-2. A complementarity-determining-2 region spans residues 72 to 78 (IYWDDDK). A framework-3 region spans residues 79 to 116 (RYSPSLKSRLTITKDTSKNQVVLTMTNMDPVDTATYYC). Residues 117-119 (AHR) are complementarity-determining-3.

Immunoglobulins are composed of two identical heavy chains and two identical light chains; disulfide-linked.

It localises to the secreted. It is found in the cell membrane. In terms of biological role, v region of the variable domain of immunoglobulin heavy chains that participates in the antigen recognition. Immunoglobulins, also known as antibodies, are membrane-bound or secreted glycoproteins produced by B lymphocytes. In the recognition phase of humoral immunity, the membrane-bound immunoglobulins serve as receptors which, upon binding of a specific antigen, trigger the clonal expansion and differentiation of B lymphocytes into immunoglobulins-secreting plasma cells. Secreted immunoglobulins mediate the effector phase of humoral immunity, which results in the elimination of bound antigens. The antigen binding site is formed by the variable domain of one heavy chain, together with that of its associated light chain. Thus, each immunoglobulin has two antigen binding sites with remarkable affinity for a particular antigen. The variable domains are assembled by a process called V-(D)-J rearrangement and can then be subjected to somatic hypermutations which, after exposure to antigen and selection, allow affinity maturation for a particular antigen. The sequence is that of Immunoglobulin heavy variable 2-5 from Homo sapiens (Human).